Consider the following 367-residue polypeptide: High osmolarity signaling protein SHO1 (367 aa).

Residues 1-32 (MSISSKIRPTPRKPSRMATDHSFKMKNFYADP) are Cytoplasmic-facing. Residues 33-53 (FAISSISLAIVSWVIAIGGSI) form a helical membrane-spanning segment. Residues 54-65 (SSASTNESFPRF) lie on the Extracellular side of the membrane. N-linked (GlcNAc...) asparagine glycosylation is present at asparagine 59. Residues 66–86 (TWWGIVYQFLTICSLMLFYCF) form a helical membrane-spanning segment. Residues 87 to 93 (DLVDHYR) are Cytoplasmic-facing. Residues 94–114 (IFITTSIAVAFVYNTNSATNL) traverse the membrane as a helical segment. Topologically, residues 115–122 (VYADGSKK) are extracellular. Residues 123–143 (AAASAGVILLSIINLIWILYY) traverse the membrane as a helical segment. The Cytoplasmic portion of the chain corresponds to 144–367 (GGDNASPTNR…LIDGPEEMHR (224 aa)). Serine 166 carries the phosphoserine modification. A disordered region spans residues 253-276 (NAKETNDNSNNQTNTNIGNTFDTD). Positions 259 to 272 (DNSNNQTNTNIGNT) are enriched in low complexity. Positions 300–361 (NFIYKAKALY…PSNYVQLIDG (62 aa)) constitute an SH3 domain.

It belongs to the SHO1 family. As to quaternary structure, forms homooligomers. Interacts (via the SH3 domain) with PBS2. Interacts with FUS1, STE11, STE50 and RNA polymerase II.

The protein localises to the cell membrane. Its subcellular location is the bud. The protein resides in the bud neck. It is found in the cell projection. Its function is as follows. Plasma membrane osmosensor that activates the high osmolarity glycerol (HOG) MAPK signaling pathway in response to high osmolarity. Detects changes in external osmolarity and activates PBS2 through the stimulation of STE11 and targets PBS2 to the plasma membrane. PBS2 activation leads to changes in glycerol production that helps to balance the intracellular and external osmotic pressures. Activates also HOG1 in response to heat stress and mediates resistance to oxidative stress. Involved in the regulation of the mating pathway. May be a receptor that feeds into the pseudohyphal growth pathway. In Saccharomyces cerevisiae (strain YJM789) (Baker's yeast), this protein is High osmolarity signaling protein SHO1 (SHO1).